Consider the following 159-residue polypeptide: Serine-protein kinase RsbW (159 aa).

This sequence belongs to the anti-sigma-factor family.

The catalysed reaction is L-seryl-[protein] + ATP = O-phospho-L-seryl-[protein] + ADP + H(+). It catalyses the reaction L-threonyl-[protein] + ATP = O-phospho-L-threonyl-[protein] + ADP + H(+). Functionally, negative regulator of sigma-B activity. Phosphorylates and inactivates its specific antagonist protein, RsbV. Upon phosphorylation of RsbV, RsbW is released and binds to sigma-B, thereby blocking its ability to form an RNA polymerase holoenzyme (E-sigma-B). This Staphylococcus aureus (strain MSSA476) protein is Serine-protein kinase RsbW.